Reading from the N-terminus, the 312-residue chain is Cathepsin O (312 aa).

Positions 1 to 23 (MKPQLVNLLLLCCCCLGRHGVAG) are cleaved as a signal peptide. A propeptide spans 24–98 (TWSWSHQREA…EGQRPIPNVS (75 aa)) (activation peptide). Residues asparagine 53 and asparagine 96 are each glycosylated (N-linked (GlcNAc...) asparagine). Cystine bridges form between cysteine 120–cysteine 161, cysteine 154–cysteine 195, and cysteine 253–cysteine 301. The active site involves cysteine 123. Catalysis depends on residues histidine 260 and asparagine 280.

It belongs to the peptidase C1 family.

The protein localises to the lysosome. It catalyses the reaction The recombinant human enzyme hydrolyzes synthetic endopeptidase substrates including Z-Phe-Arg-NHMec and Z-Arg-Arg-NHMec.. Its function is as follows. Proteolytic enzyme possibly involved in normal cellular protein degradation and turnover. This is Cathepsin O (Ctso) from Mus musculus (Mouse).